The sequence spans 343 residues: Tetraacyldisaccharide 4'-kinase (343 aa).

Position 65–72 (65–72 (HAGGTGKT)) interacts with ATP.

The protein belongs to the LpxK family.

The catalysed reaction is a lipid A disaccharide + ATP = a lipid IVA + ADP + H(+). It functions in the pathway glycolipid biosynthesis; lipid IV(A) biosynthesis; lipid IV(A) from (3R)-3-hydroxytetradecanoyl-[acyl-carrier-protein] and UDP-N-acetyl-alpha-D-glucosamine: step 6/6. Functionally, transfers the gamma-phosphate of ATP to the 4'-position of a tetraacyldisaccharide 1-phosphate intermediate (termed DS-1-P) to form tetraacyldisaccharide 1,4'-bis-phosphate (lipid IVA). This is Tetraacyldisaccharide 4'-kinase from Neisseria gonorrhoeae (strain ATCC 700825 / FA 1090).